The primary structure comprises 219 residues: MNILLVEDDLQLGKALCRALELAGFNLCWVRLIADAENKLSSGGFDLMLLDLTLPDGDGLQKLIAWRAAGQNIPIIILTARDRIESLVNSLDSGANDFLAKPFALPELISRVKAVNRRMAGFASQTWSLGALYLDPVNHQVMLDNELLMLSKKEYHLLHELMRCAGTVVRKAVLEQRLFGHGDSVESNSLEVHMHNLRRKIGKDRVITVRGIGYLLKKE.

Residues 2-116 (NILLVEDDLQ…ELISRVKAVN (115 aa)) enclose the Response regulatory domain. D51 is modified (4-aspartylphosphate). A DNA-binding region (ompR/PhoB-type) is located at residues 124-218 (SQTWSLGALY…VRGIGYLLKK (95 aa)).

It localises to the cytoplasm. Its function is as follows. Member of the two-component regulatory system RssA/RssB involved in regulation of swarming motility which has been shown to be inhibited by saturated fatty acids. RssA/RssB regulates cellular fatty acid composition, hemolysin production and cell surface topography. RssA/RssB negatively regulates the activity of SlhBA. It can also act as a negative regulator for the control of the swarming initiation. RssB binds its own promoter. The protein is Swarming motility regulation protein RssB (rssB) of Serratia marcescens.